The following is a 254-amino-acid chain: MNNTPRYPQRVRNDLRFRELTVLRVERISAGFQRIVLGGEALDGFTSRGFDDHSKLFFPQPDAHFVPPTVTEEGIVWPEGPRPPSRDYTPLYDELRHELAIDFFIHDGGVASGWAMQAQPGDKLTVAGPRGSLVVPEDYAYQLYVCDESGMPALRRRLETLSKLAVKPQVSALVSVRDNACQDYLAHLDGFNIEWLAHDEQAVDARLAQMQIPADDYFIWITGEGKVVKNLSRRFEAEQYDPQRVRAAAYWHAK.

The 122-residue stretch at 15-136 (LRFRELTVLR…AGPRGSLVVP (122 aa)) folds into the FAD-binding FR-type domain.

Belongs to the SIP oxidoreductase family.

It is found in the cytoplasm. The enzyme catalyses 2 a Fe(II)-siderophore + NADP(+) + H(+) = 2 a Fe(III)-siderophore + NADPH. In terms of biological role, plays a role in iron homeostasis under excess nickel conditions. This is NADPH-dependent ferric-chelate reductase (yqjH) from Escherichia coli (strain K12).